Here is a 637-residue protein sequence, read N- to C-terminus: 1,4-alpha-glucan branching enzyme GlgB (637 aa).

Asp-307 serves as the catalytic Nucleophile. Residue Glu-361 is the Proton donor of the active site.

The protein belongs to the glycosyl hydrolase 13 family. GlgB subfamily. As to quaternary structure, monomer.

The enzyme catalyses Transfers a segment of a (1-&gt;4)-alpha-D-glucan chain to a primary hydroxy group in a similar glucan chain.. The protein operates within glycan biosynthesis; glycogen biosynthesis. Functionally, catalyzes the formation of the alpha-1,6-glucosidic linkages in glycogen by scission of a 1,4-alpha-linked oligosaccharide from growing alpha-1,4-glucan chains and the subsequent attachment of the oligosaccharide to the alpha-1,6 position. This is 1,4-alpha-glucan branching enzyme GlgB from Oceanobacillus iheyensis (strain DSM 14371 / CIP 107618 / JCM 11309 / KCTC 3954 / HTE831).